Reading from the N-terminus, the 268-residue chain is Zinc finger protein SNAI2 (268 aa).

The segment at 1–20 (MPRSFLVKKHFNASKKPNYS) is SNAG domain. Positions 80–117 (SSSLGRVSPPPPSDTSSKDHSGSESPISDEEERLQSKL) are disordered. 4 C2H2-type zinc fingers span residues 128-150 (FQCNLCNKTYSTFSGLAKHKQLH), 159-181 (FSCKYCDKEYVSLGALKMHIRTH), 185-207 (CVCKICGKAFSRPWLLQGHIRTH), and 213-235 (FSCPHCNRAFADRSNLRAHLQTH). The C2H2-type 5; atypical zinc-finger motif lies at 241-264 (YQCKNCSKTFSRMSLLHKHEESGC).

It belongs to the snail C2H2-type zinc-finger protein family. Interacts (via SNAG domain) with LIMD1 (via LIM domains), WTIP (via LIM domains) and AJUBA (via LIM domains). Interacts (via zinc fingers) with KPNA2, KPNB1, and TNPO1. May interact (via zinc fingers) with IPO7. Post-translationally, phosphorylated by GSK3B. Once phosphorylated, it becomes a target for ubiquitination. In terms of processing, ubiquitinated by the SCF(FBXO11) complex; ubiquitination requires previous GSK3B-mediated SNAI2 phosphorylation. As to expression, expressed in most adult human tissues, including spleen, thymus, prostate, testis, ovary, small intestine, colon, heart, brain, placenta, lung, liver, skeletal muscle, kidney and pancreas. Not detected in peripheral blood leukocyte. Expressed in the dermis and in all layers of the epidermis, with high levels of expression in the basal layers (at protein level). Expressed in osteoblasts (at protein level). Expressed in mesenchymal stem cells (at protein level). Expressed in breast tumor cells (at protein level).

It localises to the nucleus. It is found in the cytoplasm. In terms of biological role, transcriptional repressor that modulates both activator-dependent and basal transcription. Involved in the generation and migration of neural crest cells. Plays a role in mediating RAF1-induced transcriptional repression of the TJ protein, occludin (OCLN) and subsequent oncogenic transformation of epithelial cells. Represses BRCA2 expression by binding to its E2-box-containing silencer and recruiting CTBP1 and HDAC1 in breast cells. In epidermal keratinocytes, binds to the E-box in ITGA3 promoter and represses its transcription. Involved in the regulation of ITGB1 and ITGB4 expression and cell adhesion and proliferation in epidermal keratinocytes. Binds to E-box2 domain of BSG and activates its expression during TGFB1-induced epithelial-mesenchymal transition (EMT) in hepatocytes. Represses E-Cadherin/CDH1 transcription via E-box elements. Involved in osteoblast maturation. Binds to RUNX2 and SOC9 promoters and may act as a positive and negative transcription regulator, respectively, in osteoblasts. Binds to CXCL12 promoter via E-box regions in mesenchymal stem cells and osteoblasts. Plays an essential role in TWIST1-induced EMT and its ability to promote invasion and metastasis. The protein is Zinc finger protein SNAI2 (SNAI2) of Homo sapiens (Human).